We begin with the raw amino-acid sequence, 310 residues long: Methionyl-tRNA formyltransferase (310 aa).

110 to 113 (SVLP) provides a ligand contact to (6S)-5,6,7,8-tetrahydrofolate. The interval 283-310 (TVQPPGKKSMNAADWARGARAEDIRRAR) is disordered. Over residues 299–310 (RGARAEDIRRAR) the composition is skewed to basic and acidic residues.

It belongs to the Fmt family.

The enzyme catalyses L-methionyl-tRNA(fMet) + (6R)-10-formyltetrahydrofolate = N-formyl-L-methionyl-tRNA(fMet) + (6S)-5,6,7,8-tetrahydrofolate + H(+). Attaches a formyl group to the free amino group of methionyl-tRNA(fMet). The formyl group appears to play a dual role in the initiator identity of N-formylmethionyl-tRNA by promoting its recognition by IF2 and preventing the misappropriation of this tRNA by the elongation apparatus. The protein is Methionyl-tRNA formyltransferase of Mycolicibacterium gilvum (strain PYR-GCK) (Mycobacterium gilvum (strain PYR-GCK)).